The primary structure comprises 159 residues: Phosphopantetheine adenylyltransferase (159 aa).

T10 is a binding site for substrate. Residues 10 to 11 (TF) and H18 each bind ATP. Positions 42, 74, and 88 each coordinate substrate. Residues 89-91 (GLR), E99, and 124-130 (WSFISSS) each bind ATP.

It belongs to the bacterial CoaD family. Homohexamer. Requires Mg(2+) as cofactor.

It localises to the cytoplasm. It catalyses the reaction (R)-4'-phosphopantetheine + ATP + H(+) = 3'-dephospho-CoA + diphosphate. It functions in the pathway cofactor biosynthesis; coenzyme A biosynthesis; CoA from (R)-pantothenate: step 4/5. In terms of biological role, reversibly transfers an adenylyl group from ATP to 4'-phosphopantetheine, yielding dephospho-CoA (dPCoA) and pyrophosphate. This chain is Phosphopantetheine adenylyltransferase, found in Yersinia enterocolitica serotype O:8 / biotype 1B (strain NCTC 13174 / 8081).